The sequence spans 416 residues: MADVEQVQVRFFTKQKKYEIADTPFSLSANIGHGDLNDLINGLLGAGNVGQSIQFDFLIDSQYLQDTIQKHMKAKEISAESVVEIEYLEKHPAPQPDNILVHDDWVSSVSRCKNCIITGSYDNCVQIWDDQGSCLAKVKGHTSPVKDVEWVSKDEQKGVFLSSSQDQSIRVMEWSIGSGEASCVHVCKGHTQSVDSISINPSATKFCSGSWDKTLKLWSAVVNPEGGDEGENGSLSKKQKTTGVKKKATTRTPLMTFTGHTQAVSSVVWMDRTTICSAGWDHCIRLWDAESGVNKQTLTGSKVFCEIAYSALNQCLASGSADKYIRLWDHRAEDGQVVRGILTSHQGWVSSVSWSPSNQFELASASYDTTVKIWDTRSPYTPLYTLTGHQDKVMCVRWSSSRHLMSGGTDNQLILY.

Residues 7 to 89 are ubiquitin-like (UBL) domain; sequence VQVRFFTKQK…ESVVEIEYLE (83 aa). WD repeat units lie at residues 101-138, 140-184, 189-228, 259-297, 299-338, 344-384, and 388-416; these read VHDD…LAKV, GHTS…ASCV, GHTQ…EGGD, GHTQ…NKQT, TGSK…GQVV, SHQG…TPLY, and GHQD…LILY. The tract at residues 226–245 is disordered; sequence GGDEGENGSLSKKQKTTGVK.

This sequence belongs to the WD repeat WDR12/YTM1 family.

The protein localises to the nucleus. It localises to the nucleolus. The protein resides in the nucleoplasm. Functionally, required for maturation of ribosomal RNAs and formation of the large ribosomal subunit. This is Ribosome biogenesis protein WDR12 homolog from Nematostella vectensis (Starlet sea anemone).